Here is a 96-residue protein sequence, read N- to C-terminus: Cytochrome b (96 aa).

Transmembrane regions (helical) follow at residues 1 to 15 (LCXI…FLAM), 39 to 60 (WLIR…YLHI), and 75 to 95 (WNVG…GYVL). Positions 45 and 59 each coordinate heme b.

Belongs to the cytochrome b family. As to quaternary structure, the cytochrome bc1 complex contains 3 respiratory subunits (MT-CYB, CYC1 and UQCRFS1), 2 core proteins (UQCRC1 and UQCRC2) and probably 6 low-molecular weight proteins. Heme b is required as a cofactor.

It localises to the mitochondrion inner membrane. Functionally, component of the ubiquinol-cytochrome c reductase complex (complex III or cytochrome b-c1 complex) that is part of the mitochondrial respiratory chain. The b-c1 complex mediates electron transfer from ubiquinol to cytochrome c. Contributes to the generation of a proton gradient across the mitochondrial membrane that is then used for ATP synthesis. The chain is Cytochrome b (mt-cyb) from Geophagus steindachneri (Red hump earth eater).